The following is a 406-amino-acid chain: Gustatory receptor for sugar taste 64b (406 aa).

Over 1-47 the chain is Cytoplasmic; the sequence is MPQGETFHRAVSNVLFISQIYGLLPVSNVRALDVADIRFRWCSPRIL. A helical transmembrane segment spans residues 48–68; it reads YSLLIGILNLSEFGAVINYVI. The Extracellular portion of the chain corresponds to 69-79; it reads KVTINFHTSST. Residues 80–100 traverse the membrane as a helical segment; that stretch reads LSLYIVCLLEHLFFWRLAIQW. Over 101–130 the chain is Cytoplasmic; it reads PRIMRTWHGVEQLFLRVPYRFYGEYRIKRR. Residues 131-151 traverse the membrane as a helical segment; sequence IYIVFTIVMSSALVEHCLLLG. Topologically, residues 152 to 183 are extracellular; it reads NSFHLSNMERTQCKINVTYFESIYKWERPHLY. N-linked (GlcNAc...) asparagine glycosylation is present at asparagine 167. The helical transmembrane segment at 184–204 threads the bilayer; the sequence is MILPYHFWMLPILEWVNQTIA. Over 205-265 the chain is Cytoplasmic; sequence YPRSFTDCFI…KRLVHLLDAA (61 aa). The helical transmembrane segment at 266–286 threads the bilayer; the sequence is IAPLVLLAFGNNMSFICFQLF. At 287-290 the chain is on the extracellular side; it reads NSFK. The chain crosses the membrane as a helical span at residues 291-311; the sequence is NIGVDFLVMLAFWYSLGFAVV. The Cytoplasmic segment spans residues 312–370; it reads RTLLTIFVASSINDYERKIVTALRDVPSRAWSIEVQRFSEQLGNDTTALSGSGFFYLTR. The helical transmembrane segment at 371-391 threads the bilayer; the sequence is SLVLAMGTTIITYELMISDVI. Topologically, residues 392-406 are extracellular; that stretch reads NQGSIRQKTQYCREY.

This sequence belongs to the insect chemoreceptor superfamily. Gustatory receptor (GR) family. Gr5a subfamily. In terms of tissue distribution, expressed in Gr5a-expressing sugar-sensing cells.

Its subcellular location is the cell membrane. In terms of biological role, one of the few identified sugar gustatory receptors identified so far and which promotes the starvation-induced increase of feeding motivation. In Drosophila melanogaster (Fruit fly), this protein is Gustatory receptor for sugar taste 64b (Gr64b).